The primary structure comprises 302 residues: Sulfate adenylyltransferase subunit 2 (302 aa).

Residues 280–302 (RQGRAIDHDQSGSMELKKRQGYF) form a disordered region.

Belongs to the PAPS reductase family. CysD subfamily. As to quaternary structure, heterodimer composed of CysD, the smaller subunit, and CysN.

It catalyses the reaction sulfate + ATP + H(+) = adenosine 5'-phosphosulfate + diphosphate. The protein operates within sulfur metabolism; hydrogen sulfide biosynthesis; sulfite from sulfate: step 1/3. Functionally, with CysN forms the ATP sulfurylase (ATPS) that catalyzes the adenylation of sulfate producing adenosine 5'-phosphosulfate (APS) and diphosphate, the first enzymatic step in sulfur assimilation pathway. APS synthesis involves the formation of a high-energy phosphoric-sulfuric acid anhydride bond driven by GTP hydrolysis by CysN coupled to ATP hydrolysis by CysD. The sequence is that of Sulfate adenylyltransferase subunit 2 from Vibrio parahaemolyticus serotype O3:K6 (strain RIMD 2210633).